The primary structure comprises 361 residues: Septin-1 (361 aa).

Positions 32-304 (KGFEFTLMVV…ENYRSDRLAK (273 aa)) constitute a Septin-type G domain. The tract at residues 42 to 49 (GESGLGKS) is G1 motif. GTP contacts are provided by residues 42-49 (GESGLGKS), Thr-76, Gly-102, 181-189 (KADCLTKKE), Gly-239, and Arg-254. The interval 99 to 102 (DTPG) is G3 motif. The G4 motif stretch occupies residues 180–183 (AKAD). Position 319 is a phosphoserine (Ser-319).

Belongs to the TRAFAC class TrmE-Era-EngA-EngB-Septin-like GTPase superfamily. Septin GTPase family. As to quaternary structure, likely part of a multicomponent septin complex that includes pnut. Interacts with pnut. Interacts with park. Ubiquitinated by park, leading to its degradation by the proteasome. In terms of tissue distribution, accumulates at the leading edge of the cleavage furrow in dividing cells and cellularizing embryos (at protein level). Also accumulates at the leading edge of the embryo epithelium during dorsal closure, in the embryonic neurons, and at the baso-lateral surfaces of ovarian follicle cells (at protein level).

Its subcellular location is the cytoplasm. In terms of biological role, involved in cytokinesis. May be involved in p53-dependent apoptosis. In Drosophila melanogaster (Fruit fly), this protein is Septin-1.